Here is a 72-residue protein sequence, read N- to C-terminus: AEKTAQACEEAEKATKCARQGTGKTGDKHNCAFRKGKDGKEEPEKEKCCDGSFLVNKKFALMVYDFVSLLAF.

Asp-50 carries GPI-anchor amidated aspartate lipidation. The propeptide at 51-72 (GSFLVNKKFALMVYDFVSLLAF) is removed in mature form.

Its subcellular location is the cell membrane. Its function is as follows. VSG forms a coat on the surface of the parasite. The trypanosome evades the immune response of the host by expressing a series of antigenically distinct VSGs from an estimated 1000 VSG genes. This is Variant surface glycoprotein MITAT 1.1000BC from Trypanosoma brucei brucei.